The chain runs to 213 residues: Imidazole glycerol phosphate synthase subunit HisH (213 aa).

The Glutamine amidotransferase type-1 domain occupies 4-211 (NLGLIDYGMG…LTWLRNGAEP (208 aa)). C82 functions as the Nucleophile in the catalytic mechanism. Catalysis depends on residues H186 and E188.

In terms of assembly, heterodimer of HisH and HisF.

The protein resides in the cytoplasm. The catalysed reaction is 5-[(5-phospho-1-deoxy-D-ribulos-1-ylimino)methylamino]-1-(5-phospho-beta-D-ribosyl)imidazole-4-carboxamide + L-glutamine = D-erythro-1-(imidazol-4-yl)glycerol 3-phosphate + 5-amino-1-(5-phospho-beta-D-ribosyl)imidazole-4-carboxamide + L-glutamate + H(+). It catalyses the reaction L-glutamine + H2O = L-glutamate + NH4(+). The protein operates within amino-acid biosynthesis; L-histidine biosynthesis; L-histidine from 5-phospho-alpha-D-ribose 1-diphosphate: step 5/9. In terms of biological role, IGPS catalyzes the conversion of PRFAR and glutamine to IGP, AICAR and glutamate. The HisH subunit catalyzes the hydrolysis of glutamine to glutamate and ammonia as part of the synthesis of IGP and AICAR. The resulting ammonia molecule is channeled to the active site of HisF. The polypeptide is Imidazole glycerol phosphate synthase subunit HisH (Synechococcus sp. (strain CC9605)).